The following is an 810-amino-acid chain: MPIPFKPVLAAAAIAQAFPAFAADPAPQSAQTLNEITVTGTHKTQKLGEEKIRRKTLDKLLVNDEHDLVRYDPGISVVEGGRAGSNGFTIRGVDKDRVAINVDGLAQAESRSSEAFQELFGAYGNFNANRNTSEPENFSEVTITKGADSLKSGSGALGGAVNYQTKSASDYVSEDKPYHLGIKGGSVGKNSQKFSSITAAGRLFGLDALLVYTRRFGKETKNRSTEGDIEIKNDGYVYNPTDTGGPSKYLTYVATGVARSQPDPQEWVNKSTLFKLGYNFNDQNRIGWIFEDSRTDRFTNELSNLWTGTTTSAATGDYRHRQDVSYRRRSGVEYKNELEHGPWDSLKLRYDKQRIDMNTWTWDIPKNYDKRGINGEVYHSFRHIRQNTAQWTADFEKQLDFSKAVWAAQYGLGGGKGDNANSDYSYFAKLYDPKILASNQAKITMLIENRSKYKFAYWNNAFHLGGNDRFRLNAGIRYDKNSSSAKDDPKYTTAIRGQIPHLGSERAHAGFSYGTGFDWRFTKHLHLLAKYSTGFRAPTSDETWLLFPHPDFYLKANPNLKAEKAKNWELGLAGSGKAGNFKLSGFKTKYRDFIELTYMGVSSDDKNNPRYAPLSDGTALVSSPVWQNQNRSAAWVKGIEFNGTWNLDSIGLPKGLHTGLNVSYIKGKATQNNGKETPINALSPWTAVYSLGYDAPSKRWGINAYATRTAAKKPSDTVHSNDDLNNPWPYAKHSKAYTLFDLSAYLNIGKQVTLRAAAYNITNKQYYTWESLRSIREFGTVNRVDNKTHAGIQRFTSPGRSYNFTIEAKF.

A signal peptide spans 1 to 22 (MPIPFKPVLAAAAIAQAFPAFA). In terms of domain architecture, TBDR plug spans 34–166 (NEITVTGTHK…LGGAVNYQTK (133 aa)). Positions 175–810 (DKPYHLGIKG…SYNFTIEAKF (636 aa)) constitute a TBDR beta-barrel domain. The TonB C-terminal box signature appears at 793-810 (QRFTSPGRSYNFTIEAKF).

This sequence belongs to the TonB-dependent receptor family.

It localises to the cell outer membrane. Its function is as follows. Acts as a receptor for hemoglobin or the hemoglobin/haptoglobin complex and is required for heme uptake. The protein is Hemoglobin-haptoglobin utilization protein B (hpuB) of Neisseria meningitidis serogroup A / serotype 4A (strain DSM 15465 / Z2491).